A 198-amino-acid chain; its full sequence is Calcium channel flower (198 aa).

3 helical membrane-spanning segments follow: residues 36–56, 67–89, and 114–134; these read LGIV…LSII, IIQM…VCIE, and AVPP…GLIF.

This sequence belongs to the calcium channel flower family. As to quaternary structure, homomultimer. Associates with the dally/ magu complex.

Its subcellular location is the cell membrane. It is found in the cytoplasmic vesicle. The protein localises to the secretory vesicle. The protein resides in the synaptic vesicle membrane. It localises to the presynaptic cell membrane. Its subcellular location is the endosome. Its activity is regulated as follows. Channel activity is inhibited by La(3+), which reduces Ca(2+) influx and thus inhibits it's function in promoting activity-dependent bulk endocytosis (ADBE) in response to high stimuli. Transmembrane protein which mediates synaptic endocytosis, fitness-based cell culling, neuronal culling, morphogen gradient scaling, and calcium transport. Regulates synaptic endocytosis and hence couples exo- with endocytosis. Controls two major modes of synaptic vesicle (SV) endocytosis in the synaptic boutons of neuromuscular junctions (NMJs); Ca(2+) channel-independent Clathrin-mediated endocytosis (CME) in response to mild stimulation, and Ca(2+) channel-dependent activity-dependent bulk endocytosis (ADBE) in response to strong stimulation. Functions in ADBE and subsequent SV reformation from bulk endosomes by initiating Ca(2+) channel-dependent phosphatidylinositol 4,5-bisphosphate (PtdIns(4,5)P2) compartmentalization in synaptic boutons. There it acts at the periactive zone to provide the low Ca(2+) levels required to initiate Calcineurin activation and upregulate PtdIns(4,5)P2. Conversely PtdIns(4,5)P2 enhances fwe Ca(2+) channel-activity, establishing a positive feedback loop that induces PtdIns(4,5)P2 microdomain at the periactive zone. These microdomains trigger bulk membrane invagination (i.e. ADBE) by triggering actin polymerization while also promoting localization of fwe to bulk endosomes, thereby removing the ADBE trigger to reduce endocytosis and prevent excess membrane uptake. PtdIns(4,5)P2 then promotes SV reformation from the bulk endosomes, to coordinate ADBE and subsequent SV reformation. Different combinations of the flower isoforms at the cell membrane are also required for the identification and elimination of suboptimal or supernumerary cells during development, regeneration, and adulthood. Required for the recognition and elimination of unfit cells in the developing wing during cell competition. In the developing pupal retina, mediates the elimination of unwanted postmitotic neurons, including supernumerary photoreceptor neurons that form at the periphery of the retina and are contained within incomplete ommatidia units. Also required for efficient elimination and replacement of old neurons by newly generated neurons during regeneration in the adult brain following mechanical injury. Downstream of the flower fitness fingerprints, cells identified as unwanted or unfit are eliminated via apoptosis through the expression of ahuizotl (azot). However, the cells marked for elimination by the flower isoforms only undergo apoptosis if additional thresholds are met; (1) their neighboring fit/healthy cells express different levels of the fwe isoforms, and (2) the levels of the protective signal SPARC expressed by the loser or unwanted cells are unable to inhibit caspase activation. These additional thresholds for flower-mediated apoptosis, allows useful cells to recover from transient and limited stress before they are unnecessarily eliminated. Functions with dally and magu in a mechanism of scaling, which utilises apoptosis to ensure that the dpp morphogen gradient, which mediates organ growth, remains proportional to the size of the growing wing. In this mechanism, fwe represses dally- and Magu-dependent activity in expanding the gradient, and dally/Magu inhibits fwe-dependent apoptosis to keep cell death rate low. When the levels of these different proteins are optimally regulated the gradient correctly scales with organ growth but when this fails, fwe-mediated apoptosis is activated to trim the developing tissue to match the correct size of the gradient. This Drosophila persimilis (Fruit fly) protein is Calcium channel flower.